The following is a 554-amino-acid chain: Macrophage colony-stimulating factor 1 (554 aa).

The signal sequence occupies residues 1–32 (MTAPGAAGRCPPTTWLGSLLLLVCLLASRSIT). Topologically, residues 33-496 (EEVSEYCSHM…GSFSPQLQES (464 aa)) are lumenal. Disulfide bonds link C39-C122, C80-C171, and C134-C178. 2 N-linked (GlcNAc...) asparagine glycosylation sites follow: N154 and N172. Residues 224 to 488 (EDSEGTEGSS…TGHERQSEGS (265 aa)) form a disordered region. Residue T266 is modified to Phosphothreonine; by FAM20C. An O-linked (Xyl...) (chondroitin sulfate) serine glycan is attached at S309. Residues 344–354 (LSASSPLPASA) show a composition bias toward low complexity. O-linked (GalNAc...) threonine glycosylation is found at T363 and T365. A compositionally biased stretch (polar residues) spans 404 to 433 (RISSLRPQGLSNPSTLSAQPQLSRSHSSGS). Residues 406 to 426 (SSLRPQGLSNPSTLSAQPQLS) are O-glycosylated at one site. The span at 440–453 (LEGRRSTRDRRSPA) shows a compositional bias: basic and acidic residues. A helical membrane pass occupies residues 497-517 (VFHLLVPSVILVLLAVGGLLF). Residues 518–554 (YRWRRRSHQEPQRADSPLEQPEGSPLTQDDRQVELPV) lie on the Cytoplasmic side of the membrane. The interval 526-554 (QEPQRADSPLEQPEGSPLTQDDRQVELPV) is disordered. A compositionally biased stretch (basic and acidic residues) spans 545 to 554 (QDDRQVELPV).

As to quaternary structure, homodimer or heterodimer; disulfide-linked. Likely to exist in multiple forms: homodimer consisting of 2 identical 150-200 kDa proteoglycan subunits, heterodimer consisting of a 150-200 kDa proteoglycan subunit and a truncated 43 kDa subunit, and homodimer consisting of 2 identical 43 kDa subunits. Interacts with CSF1R. In terms of processing, N-glycosylated. Post-translationally, O-glycosylated; contains chondroitin sulfate. O-glycosylated with core 1 or possibly core 8 glycans. O-glycosylated.

It is found in the cell membrane. The protein resides in the secreted. The protein localises to the extracellular space. Its function is as follows. Cytokine that plays an essential role in the regulation of survival, proliferation and differentiation of hematopoietic precursor cells, especially mononuclear phagocytes, such as macrophages and monocytes. Promotes the release of pro-inflammatory chemokines, and thereby plays an important role in innate immunity and in inflammatory processes. Plays an important role in the regulation of osteoclast proliferation and differentiation, the regulation of bone resorption, and is required for normal bone development. Required for normal male and female fertility. Promotes reorganization of the actin cytoskeleton, regulates formation of membrane ruffles, cell adhesion and cell migration. Plays a role in lipoprotein clearance. The sequence is that of Macrophage colony-stimulating factor 1 (CSF1) from Homo sapiens (Human).